Reading from the N-terminus, the 768-residue chain is Eukaryotic elongation factor 2 kinase (768 aa).

The segment covering 1–17 (MTIDTTNESDNSPTNSP) has biased composition (polar residues). Residues 1–21 (MTIDTTNESDNSPTNSPGLEA) are disordered. The region spanning 102–309 (RYSAIRKQWT…ICETMDLSNF (208 aa)) is the Alpha-type protein kinase domain. 279–284 (GDGNLG) provides a ligand contact to ATP. The segment covering 402–411 (SEDEEDEEED) has biased composition (acidic residues). The segment at 402 to 446 (SEDEEDEEEDYPRSEKSGNSQKSRRSRMSISTRSSGDESASRPRK) is disordered.

This sequence belongs to the protein kinase superfamily. Alpha-type protein kinase family. Monomer or homodimer. Interacts with cmd-1 in the presence of Ca(2+).

The enzyme catalyses [translation elongation factor 2] + ATP = [translation elongation factor 2]-phosphate + ADP + H(+). Its activity is regulated as follows. Calcium(2+)/calmodulin dependent activity. Undergoes calcium/calmodulin-dependent intramolecular autophosphorylation, and this results in it becoming partially calcium/calmodulin-independent. Its function is as follows. Phosphorylates elongation factor-2 (eEF-2) at two threonine residues that are conserved in all eukaryotes and are located within a GTP-binding domain. Calcium(2+)/calmodulin dependent activity. Inactivates eEF-2 by catalyzing its phosphorylation. eEF-2 catalyzes the movement of the ribosome along mRNA during translation in eukaryotic cells. This chain is Eukaryotic elongation factor 2 kinase (efk-1), found in Caenorhabditis elegans.